We begin with the raw amino-acid sequence, 278 residues long: 2-(acetamidomethylene)succinate hydrolase (278 aa).

Chloride contacts are provided by residues I41 and 106 to 107 (SL). S106 serves as the catalytic Nucleophile. Catalysis depends on residues D130 and H258.

It belongs to the AB hydrolase superfamily. Homodimer.

It carries out the reaction 2-(acetamidomethylene)succinate + 2 H2O + H(+) = succinate semialdehyde + acetate + NH4(+) + CO2. The protein operates within cofactor degradation; B6 vitamer degradation. Functionally, catalyzes the final reaction in the degradation of vitamin B6 from (E)-2-(acetamidomethylene)succinate (E-2AMS) to produce succinic semialdehyde, acetate, ammonia and carbon dioxide. This is 2-(acetamidomethylene)succinate hydrolase from Mesorhizobium japonicum (strain LMG 29417 / CECT 9101 / MAFF 303099) (Mesorhizobium loti (strain MAFF 303099)).